The chain runs to 284 residues: Asialoglycoprotein receptor 1 (284 aa).

Over residues 1–18 (MTKDYQDFQHLDNDNDHH) the composition is skewed to basic and acidic residues. A disordered region spans residues 1 to 25 (MTKDYQDFQHLDNDNDHHQLRRGPP). Over 1-39 (MTKDYQDFQHLDNDNDHHQLRRGPPPTPRLLQRLCSGSR) the chain is Cytoplasmic. Residues 5 to 8 (YQDF) carry the Endocytosis signal motif. The S-palmitoyl cysteine moiety is linked to residue Cys-35. A helical; Signal-anchor for type II membrane protein transmembrane segment spans residues 40–60 (LLLLSSSLSILLLVVVCVITS). Residues 59 to 117 (TSQNSQLREDLLALRQNFSNLTVSTEDQVKALSTQGSSVGRKMKLVESKLEKQQKDLTE) adopt a coiled-coil conformation. Topologically, residues 61–284 (QNSQLREDLL…VCETKLDKAN (224 aa)) are extracellular. 3 N-linked (GlcNAc...) asparagine glycosylation sites follow: Asn-75, Asn-78, and Asn-146. 3 disulfides stabilise this stretch: Cys-153/Cys-164, Cys-181/Cys-276, and Cys-254/Cys-268. Residues 160–277 (YEGSCYWFSS…CRRPYRWVCE (118 aa)) enclose the C-type lectin domain. Residues Val-190, Glu-196, Asp-215, Gln-239, Asp-241, Glu-252, Asp-253, Asn-264, Asp-265, and Glu-277 each coordinate Ca(2+).

In terms of assembly, interacts with LASS2. In terms of processing, phosphorylated on a cytoplasmic Ser residue. Expressed exclusively in hepatic parenchymal cells.

The protein resides in the membrane. Functionally, mediates the endocytosis of plasma glycoproteins to which the terminal sialic acid residue on their complex carbohydrate moieties has been removed. The receptor recognizes terminal galactose and N-acetylgalactosamine units. After ligand binding to the receptor, the resulting complex is internalized and transported to a sorting organelle, where receptor and ligand are disassociated. The receptor then returns to the cell membrane surface. This chain is Asialoglycoprotein receptor 1 (Asgr1), found in Mus musculus (Mouse).